Consider the following 211-residue polypeptide: Ribosome maturation factor RimM (211 aa).

One can recognise a PRC barrel domain in the interval 111-182 (PDAWYDHQLV…TLVVTPPLGL (72 aa)). The tract at residues 184-211 (EEIPDETPTAEPTPAEAAEPAPEGDDAR) is disordered. Residues 189 to 204 (ETPTAEPTPAEAAEPA) are compositionally biased toward low complexity.

It belongs to the RimM family. As to quaternary structure, binds ribosomal protein uS19.

It localises to the cytoplasm. An accessory protein needed during the final step in the assembly of 30S ribosomal subunit, possibly for assembly of the head region. Essential for efficient processing of 16S rRNA. May be needed both before and after RbfA during the maturation of 16S rRNA. It has affinity for free ribosomal 30S subunits but not for 70S ribosomes. The polypeptide is Ribosome maturation factor RimM (Clavibacter michiganensis subsp. michiganensis (strain NCPPB 382)).